Consider the following 319-residue polypeptide: 4-hydroxy-3-methylbut-2-enyl diphosphate reductase (319 aa).

Cys15 is a binding site for [4Fe-4S] cluster. Residues His44 and His77 each coordinate (2E)-4-hydroxy-3-methylbut-2-enyl diphosphate. His44 and His77 together coordinate dimethylallyl diphosphate. Isopentenyl diphosphate is bound by residues His44 and His77. Cys99 is a [4Fe-4S] cluster binding site. Residue His127 participates in (2E)-4-hydroxy-3-methylbut-2-enyl diphosphate binding. A dimethylallyl diphosphate-binding site is contributed by His127. Residue His127 coordinates isopentenyl diphosphate. Glu129 (proton donor) is an active-site residue. Thr167 contributes to the (2E)-4-hydroxy-3-methylbut-2-enyl diphosphate binding site. [4Fe-4S] cluster is bound at residue Cys197. (2E)-4-hydroxy-3-methylbut-2-enyl diphosphate contacts are provided by Ser225, Ser226, Asn227, and Ser269. Residues Ser225, Ser226, Asn227, and Ser269 each contribute to the dimethylallyl diphosphate site. The isopentenyl diphosphate site is built by Ser225, Ser226, Asn227, and Ser269.

Belongs to the IspH family. [4Fe-4S] cluster is required as a cofactor.

The catalysed reaction is isopentenyl diphosphate + 2 oxidized [2Fe-2S]-[ferredoxin] + H2O = (2E)-4-hydroxy-3-methylbut-2-enyl diphosphate + 2 reduced [2Fe-2S]-[ferredoxin] + 2 H(+). It catalyses the reaction dimethylallyl diphosphate + 2 oxidized [2Fe-2S]-[ferredoxin] + H2O = (2E)-4-hydroxy-3-methylbut-2-enyl diphosphate + 2 reduced [2Fe-2S]-[ferredoxin] + 2 H(+). Its pathway is isoprenoid biosynthesis; dimethylallyl diphosphate biosynthesis; dimethylallyl diphosphate from (2E)-4-hydroxy-3-methylbutenyl diphosphate: step 1/1. It functions in the pathway isoprenoid biosynthesis; isopentenyl diphosphate biosynthesis via DXP pathway; isopentenyl diphosphate from 1-deoxy-D-xylulose 5-phosphate: step 6/6. Its function is as follows. Catalyzes the conversion of 1-hydroxy-2-methyl-2-(E)-butenyl 4-diphosphate (HMBPP) into a mixture of isopentenyl diphosphate (IPP) and dimethylallyl diphosphate (DMAPP). Acts in the terminal step of the DOXP/MEP pathway for isoprenoid precursor biosynthesis. This is 4-hydroxy-3-methylbut-2-enyl diphosphate reductase from Rhodopirellula baltica (strain DSM 10527 / NCIMB 13988 / SH1).